A 418-amino-acid polypeptide reads, in one-letter code: Serine hydroxymethyltransferase (418 aa).

Residues Leu121 and 125–127 (GHL) each bind (6S)-5,6,7,8-tetrahydrofolate. N6-(pyridoxal phosphate)lysine is present on Lys230. 355-357 (SPF) contacts (6S)-5,6,7,8-tetrahydrofolate.

This sequence belongs to the SHMT family. As to quaternary structure, homodimer. It depends on pyridoxal 5'-phosphate as a cofactor.

It localises to the cytoplasm. The catalysed reaction is (6R)-5,10-methylene-5,6,7,8-tetrahydrofolate + glycine + H2O = (6S)-5,6,7,8-tetrahydrofolate + L-serine. The protein operates within one-carbon metabolism; tetrahydrofolate interconversion. It participates in amino-acid biosynthesis; glycine biosynthesis; glycine from L-serine: step 1/1. Catalyzes the reversible interconversion of serine and glycine with tetrahydrofolate (THF) serving as the one-carbon carrier. This reaction serves as the major source of one-carbon groups required for the biosynthesis of purines, thymidylate, methionine, and other important biomolecules. Also exhibits THF-independent aldolase activity toward beta-hydroxyamino acids, producing glycine and aldehydes, via a retro-aldol mechanism. In Alcanivorax borkumensis (strain ATCC 700651 / DSM 11573 / NCIMB 13689 / SK2), this protein is Serine hydroxymethyltransferase.